Here is a 122-residue protein sequence, read N- to C-terminus: Small ribosomal subunit protein uS13 (122 aa).

The interval 93-122 (RRSLPVRGQRTHTNARTRKGPAKPIAGKKK) is disordered.

It belongs to the universal ribosomal protein uS13 family. In terms of assembly, part of the 30S ribosomal subunit. Forms a loose heterodimer with protein S19. Forms two bridges to the 50S subunit in the 70S ribosome.

Its function is as follows. Located at the top of the head of the 30S subunit, it contacts several helices of the 16S rRNA. In the 70S ribosome it contacts the 23S rRNA (bridge B1a) and protein L5 of the 50S subunit (bridge B1b), connecting the 2 subunits; these bridges are implicated in subunit movement. Contacts the tRNAs in the A and P-sites. The chain is Small ribosomal subunit protein uS13 from Chelativorans sp. (strain BNC1).